The primary structure comprises 54 residues: UPF0391 membrane protein BMEI0373 (54 aa).

2 consecutive transmembrane segments (helical) span residues 5–25 (VLVF…GIAG) and 29–48 (GIAQ…SLIA).

It belongs to the UPF0391 family.

Its subcellular location is the cell membrane. The chain is UPF0391 membrane protein BMEI0373 from Brucella melitensis biotype 1 (strain ATCC 23456 / CCUG 17765 / NCTC 10094 / 16M).